We begin with the raw amino-acid sequence, 413 residues long: Gamma-glutamyl phosphate reductase (413 aa).

It belongs to the gamma-glutamyl phosphate reductase family.

The protein localises to the cytoplasm. It carries out the reaction L-glutamate 5-semialdehyde + phosphate + NADP(+) = L-glutamyl 5-phosphate + NADPH + H(+). It participates in amino-acid biosynthesis; L-proline biosynthesis; L-glutamate 5-semialdehyde from L-glutamate: step 2/2. In terms of biological role, catalyzes the NADPH-dependent reduction of L-glutamate 5-phosphate into L-glutamate 5-semialdehyde and phosphate. The product spontaneously undergoes cyclization to form 1-pyrroline-5-carboxylate. This chain is Gamma-glutamyl phosphate reductase, found in Alkaliphilus oremlandii (strain OhILAs) (Clostridium oremlandii (strain OhILAs)).